The sequence spans 186 residues: MASEDPSVSGVSGRYATALFELARDEKSIDAVTADLDKFSAMLAGSPDLVRLVRSPVFASEVQGKALAAVLDKAGITGISANFLKVLAANRRLFVVADVIRAYRALVAKFKGEATADVTVAEKLSDKNLEALKAALKSVTGKDVALNINVDPAIIGGLVVKLGSRMVDSSLRTKLNSIKHAMKEAG.

It belongs to the ATPase delta chain family. In terms of assembly, F-type ATPases have 2 components, F(1) - the catalytic core - and F(0) - the membrane proton channel. F(1) has five subunits: alpha(3), beta(3), gamma(1), delta(1), epsilon(1). CF(0) has four main subunits: a(1), b(1), b'(1) and c(10-14). The alpha and beta chains form an alternating ring which encloses part of the gamma chain. F(1) is attached to F(0) by a central stalk formed by the gamma and epsilon chains, while a peripheral stalk is formed by the delta, b and b' chains.

It is found in the cell inner membrane. F(1)F(0) ATP synthase produces ATP from ADP in the presence of a proton or sodium gradient. F-type ATPases consist of two structural domains, F(1) containing the extramembraneous catalytic core and F(0) containing the membrane proton channel, linked together by a central stalk and a peripheral stalk. During catalysis, ATP synthesis in the catalytic domain of F(1) is coupled via a rotary mechanism of the central stalk subunits to proton translocation. In terms of biological role, this protein is part of the stalk that links CF(0) to CF(1). It either transmits conformational changes from CF(0) to CF(1) or is implicated in proton conduction. The sequence is that of ATP synthase subunit delta from Rhodopseudomonas palustris (strain ATCC BAA-98 / CGA009).